The chain runs to 146 residues: Hemoglobin subunit beta (146 aa).

Residues 2 to 146 enclose the Globin domain; that stretch reads PFSAHEEKLI…VAAALSVEYY (145 aa). 2 residues coordinate heme b: histidine 63 and histidine 92.

It belongs to the globin family. In terms of assembly, heterotetramer of two alpha chains and two beta chains. When oxygenated in vitro, exists virtually only in polymeric form. When deoxygenated, forms tetramers, octamers and larger polymers. In terms of tissue distribution, red blood cells.

Functionally, involved in oxygen transport from the lung to the various peripheral tissues. This Paleosuchus palpebrosus (Cuvier's smooth-fronted caiman) protein is Hemoglobin subunit beta.